The chain runs to 204 residues: uncharacterized protein (204 aa).

This is an uncharacterized protein from Caenorhabditis elegans.